We begin with the raw amino-acid sequence, 452 residues long: UDP-glycosyltransferase 76D1 (452 aa).

UDP-alpha-D-glucose is bound by residues serine 269, 329-331 (APQ), 346-354 (HGGWNSCLE), and 368-371 (SGDQ).

Belongs to the UDP-glycosyltransferase family.

Its function is as follows. Possesses low quercetin 7-O-glucosyltransferase activity in vitro. The chain is UDP-glycosyltransferase 76D1 (UGT76D1) from Arabidopsis thaliana (Mouse-ear cress).